The following is a 112-amino-acid chain: MPLYEYECDSCGVFTALRKMSESSLPAECDCCGAVSPRILSVPKLAIMDKLQRSAHERNEKSANEPRTARRSSCGCTGSHTCKTKPPVNQDTGKPGLQMQTKKTARPWMVGH.

Residues glutamine 52–threonine 68 are compositionally biased toward basic and acidic residues. The tract at residues glutamine 52–histidine 112 is disordered. Residues cysteine 74–lysine 102 are compositionally biased toward polar residues.

The protein resides in the cytoplasm. Its function is as follows. May be a positive regulator of formamidase. The sequence is that of Putative regulatory protein FmdB (fmdB) from Methylophilus methylotrophus (Bacterium W3A1).